The primary structure comprises 37 residues: Large ribosomal subunit protein bL36 (37 aa).

It belongs to the bacterial ribosomal protein bL36 family.

The protein is Large ribosomal subunit protein bL36 of Halorhodospira halophila (strain DSM 244 / SL1) (Ectothiorhodospira halophila (strain DSM 244 / SL1)).